A 508-amino-acid chain; its full sequence is UDP-N-acetylmuramyl-tripeptide synthetase (508 aa).

Serine 35 contributes to the UDP-N-acetyl-alpha-D-muramoyl-L-alanyl-D-glutamate binding site. 118–124 provides a ligand contact to ATP; that stretch reads GTDGKSS. Residues 163–164, threonine 190, and arginine 200 each bind UDP-N-acetyl-alpha-D-muramoyl-L-alanyl-D-glutamate; that span reads ST. N6-carboxylysine is present on lysine 232.

It belongs to the MurCDEF family. MurE subfamily. In terms of processing, carboxylation is probably crucial for Mg(2+) binding and, consequently, for the gamma-phosphate positioning of ATP.

It localises to the cytoplasm. The protein operates within cell wall biogenesis; peptidoglycan biosynthesis. Its function is as follows. Catalyzes the addition of an amino acid to the nucleotide precursor UDP-N-acetylmuramoyl-L-alanyl-D-glutamate (UMAG) in the biosynthesis of bacterial cell-wall peptidoglycan. The polypeptide is UDP-N-acetylmuramyl-tripeptide synthetase (Borreliella burgdorferi (strain ATCC 35210 / DSM 4680 / CIP 102532 / B31) (Borrelia burgdorferi)).